A 120-amino-acid chain; its full sequence is Ribosome-binding factor A (120 aa).

The protein belongs to the RbfA family. As to quaternary structure, monomer. Binds 30S ribosomal subunits, but not 50S ribosomal subunits or 70S ribosomes.

It localises to the cytoplasm. Functionally, one of several proteins that assist in the late maturation steps of the functional core of the 30S ribosomal subunit. Associates with free 30S ribosomal subunits (but not with 30S subunits that are part of 70S ribosomes or polysomes). Required for efficient processing of 16S rRNA. May interact with the 5'-terminal helix region of 16S rRNA. This Chlamydia caviae (strain ATCC VR-813 / DSM 19441 / 03DC25 / GPIC) (Chlamydophila caviae) protein is Ribosome-binding factor A.